The following is a 354-amino-acid chain: Magnesium-protoporphyrin IX monomethyl ester [oxidative] cyclase (354 aa).

The protein belongs to the AcsF family. The cofactor is Fe cation.

It is found in the plastid. The protein resides in the chloroplast. It carries out the reaction Mg-protoporphyrin IX 13-monomethyl ester + 3 NADPH + 3 O2 + 2 H(+) = 3,8-divinyl protochlorophyllide a + 3 NADP(+) + 5 H2O. It participates in porphyrin-containing compound metabolism; chlorophyll biosynthesis (light-independent). In terms of biological role, catalyzes the formation of the isocyclic ring in chlorophyll biosynthesis. Mediates the cyclase reaction, which results in the formation of divinylprotochlorophyllide (Pchlide) characteristic of all chlorophylls from magnesium-protoporphyrin IX 13-monomethyl ester (MgPMME). The protein is Magnesium-protoporphyrin IX monomethyl ester [oxidative] cyclase of Cyanidium caldarium (Red alga).